We begin with the raw amino-acid sequence, 160 residues long: Cytochrome b6-f complex subunit 4 (160 aa).

Helical transmembrane passes span 36–56 (LLYI…GLAV), 95–115 (LLGI…PFIE), and 128–148 (VAMT…IGAA).

Belongs to the cytochrome b family. PetD subfamily. The 4 large subunits of the cytochrome b6-f complex are cytochrome b6, subunit IV (17 kDa polypeptide, PetD), cytochrome f and the Rieske protein, while the 4 small subunits are PetG, PetL, PetM and PetN. The complex functions as a dimer.

It is found in the cellular thylakoid membrane. Component of the cytochrome b6-f complex, which mediates electron transfer between photosystem II (PSII) and photosystem I (PSI), cyclic electron flow around PSI, and state transitions. This chain is Cytochrome b6-f complex subunit 4, found in Synechococcus sp. (strain CC9902).